A 397-amino-acid polypeptide reads, in one-letter code: N-acetyllactosaminide beta-1,3-N-acetylglucosaminyltransferase 2 (397 aa).

The Cytoplasmic segment spans residues 1–7 (MSVGRRR). Residues 8 to 28 (IKLLGILMMANVFIYFIMEVS) form a helical; Signal-anchor for type II membrane protein membrane-spanning segment. The Lumenal portion of the chain corresponds to 29-397 (KSSSQEKNGK…SQLQSAHLKC (369 aa)). 5 N-linked (GlcNAc...) asparagine glycosylation sites follow: N79, N89, N127, N173, and N219.

This sequence belongs to the glycosyltransferase 31 family. In terms of assembly, interacts with B3GNT8; this interaction greatly increases B3GNT2 catalytic activity, independently of B3GNT8 enzymatic activity. It depends on Mn(2+) as a cofactor. In terms of tissue distribution, ubiquitous.

The protein localises to the golgi apparatus membrane. It carries out the reaction a beta-D-galactosyl-(1-&gt;4)-N-acetyl-beta-D-glucosaminyl derivative + UDP-N-acetyl-alpha-D-glucosamine = an N-acetyl-beta-D-glucosaminyl-(1-&gt;3)-beta-D-galactosyl-(1-&gt;4)-N-acetyl-beta-D-glucosaminyl derivative + UDP + H(+). Its pathway is protein modification; protein glycosylation. In terms of biological role, beta-1,3-N-acetylglucosaminyltransferase involved in the synthesis of poly-N-acetyllactosamine. Catalyzes the initiation and elongation of poly-N-acetyllactosamine chains. Shows a marked preference for Gal(beta1-4)Glc(NAc)-based acceptors. Probably constitutes the main polylactosamine synthase. The chain is N-acetyllactosaminide beta-1,3-N-acetylglucosaminyltransferase 2 (B3GNT2) from Homo sapiens (Human).